The chain runs to 331 residues: UPF0324 membrane protein SERP0111 (331 aa).

10 helical membrane-spanning segments follow: residues 7-26 (ASFM…SYIL), 31-48 (ILHT…AMIY), 69-88 (LLKF…DILG), 93-115 (LLLI…NQII), 122-144 (SILL…APIL), 154-176 (SVGI…EAIF), 183-205 (YGAW…GIGG), 249-271 (IPYF…IPSL), 275-297 (IINV…NIVL), and 308-330 (FIVI…SIMF).

It belongs to the UPF0324 family.

It is found in the cell membrane. This Staphylococcus epidermidis (strain ATCC 35984 / DSM 28319 / BCRC 17069 / CCUG 31568 / BM 3577 / RP62A) protein is UPF0324 membrane protein SERP0111.